A 72-amino-acid polypeptide reads, in one-letter code: Small ribosomal subunit protein eS17 (72 aa).

This sequence belongs to the eukaryotic ribosomal protein eS17 family.

This chain is Small ribosomal subunit protein eS17, found in Nanoarchaeum equitans (strain Kin4-M).